A 144-amino-acid polypeptide reads, in one-letter code: Small ribosomal subunit protein eS19B (144 aa).

Belongs to the eukaryotic ribosomal protein eS19 family. In terms of assembly, component of the small ribosomal subunit (SSU). Mature yeast ribosomes consist of a small (40S) and a large (60S) subunit. The 40S small subunit contains 1 molecule of ribosomal RNA (18S rRNA) and 33 different proteins (encoded by 57 genes). The large 60S subunit contains 3 rRNA molecules (25S, 5.8S and 5S rRNA) and 46 different proteins (encoded by 81 genes).

It localises to the cytoplasm. Component of the ribosome, a large ribonucleoprotein complex responsible for the synthesis of proteins in the cell. The small ribosomal subunit (SSU) binds messenger RNAs (mRNAs) and translates the encoded message by selecting cognate aminoacyl-transfer RNA (tRNA) molecules. The large subunit (LSU) contains the ribosomal catalytic site termed the peptidyl transferase center (PTC), which catalyzes the formation of peptide bonds, thereby polymerizing the amino acids delivered by tRNAs into a polypeptide chain. The nascent polypeptides leave the ribosome through a tunnel in the LSU and interact with protein factors that function in enzymatic processing, targeting, and the membrane insertion of nascent chains at the exit of the ribosomal tunnel. eS19 is required for proper maturation of the small (40S) ribosomal subunit. Binds to 40S pre-ribosomal particles, probably required after association of NOC4 but before association of ENP1, TSR1 and RIO2 with 20/21S pre-rRNA. Functionally, required for proper maturation of the small (40S) ribosomal subunit. Binds to 40s pre-ribosomal particles, probably required after association of NOC4 but before association of ENP1, TSR1 and RIO2 with 20/21S pre-rRNA. The chain is Small ribosomal subunit protein eS19B from Saccharomyces cerevisiae (strain ATCC 204508 / S288c) (Baker's yeast).